The primary structure comprises 965 residues: Translation initiation factor IF-2 (965 aa).

The interval 94–375 (RTFVRRDEAA…RGKHQESTTF (282 aa)) is disordered. Residues 104–115 (EQAAEATGNGQE) are compositionally biased toward low complexity. Over residues 121 to 177 (ELQRREEEARHEAELLEKQAQELKARQEQLAREEAERQAREQAAEAERRRAEEEAAK) the composition is skewed to basic and acidic residues. Low complexity predominate over residues 181–191 (AAVAEAAAAAR). The segment covering 192–253 (EQAEQERASQ…KAEAEARAIR (62 aa)) has biased composition (basic and acidic residues). Pro residues predominate over residues 267–276 (PEPPPKPAEA). The segment covering 303-320 (KKPAPAAAAQPAATTQPA) has biased composition (low complexity). Residues 351–364 (TSGGVDRGWRGGPK) show a composition bias toward gly residues. Positions 465 to 634 (PRPPVVTVMG…LLQAEVLELK (170 aa)) constitute a tr-type G domain. The G1 stretch occupies residues 474–481 (GHVDHGKT). 474–481 (GHVDHGKT) contributes to the GTP binding site. The segment at 499-503 (GITQH) is G2. Residues 520–523 (DTPG) form a G3 region. GTP contacts are provided by residues 520 to 524 (DTPGH) and 574 to 577 (NKID). The G4 stretch occupies residues 574–577 (NKID). A G5 region spans residues 610-612 (SAK).

This sequence belongs to the TRAFAC class translation factor GTPase superfamily. Classic translation factor GTPase family. IF-2 subfamily.

It is found in the cytoplasm. Functionally, one of the essential components for the initiation of protein synthesis. Protects formylmethionyl-tRNA from spontaneous hydrolysis and promotes its binding to the 30S ribosomal subunits. Also involved in the hydrolysis of GTP during the formation of the 70S ribosomal complex. In Paraburkholderia phymatum (strain DSM 17167 / CIP 108236 / LMG 21445 / STM815) (Burkholderia phymatum), this protein is Translation initiation factor IF-2.